We begin with the raw amino-acid sequence, 341 residues long: RNA 3'-terminal phosphate cyclase (341 aa).

ATP is bound by residues Gln-102 and 283–287 (HLADQ). The active-site Tele-AMP-histidine intermediate is His-308.

This sequence belongs to the RNA 3'-terminal cyclase family. Type 1 subfamily.

The protein localises to the cytoplasm. It carries out the reaction a 3'-end 3'-phospho-ribonucleotide-RNA + ATP = a 3'-end 2',3'-cyclophospho-ribonucleotide-RNA + AMP + diphosphate. Catalyzes the conversion of 3'-phosphate to a 2',3'-cyclic phosphodiester at the end of RNA. The mechanism of action of the enzyme occurs in 3 steps: (A) adenylation of the enzyme by ATP; (B) transfer of adenylate to an RNA-N3'P to produce RNA-N3'PP5'A; (C) and attack of the adjacent 2'-hydroxyl on the 3'-phosphorus in the diester linkage to produce the cyclic end product. The biological role of this enzyme is unknown but it is likely to function in some aspects of cellular RNA processing. This is RNA 3'-terminal phosphate cyclase from Ectopseudomonas mendocina (strain ymp) (Pseudomonas mendocina).